The primary structure comprises 310 residues: Ribosomal RNA small subunit methyltransferase H (310 aa).

S-adenosyl-L-methionine contacts are provided by residues 40 to 42 (GGH), Asp-59, Phe-89, Asp-104, and Gln-111.

This sequence belongs to the methyltransferase superfamily. RsmH family.

It is found in the cytoplasm. The enzyme catalyses cytidine(1402) in 16S rRNA + S-adenosyl-L-methionine = N(4)-methylcytidine(1402) in 16S rRNA + S-adenosyl-L-homocysteine + H(+). Functionally, specifically methylates the N4 position of cytidine in position 1402 (C1402) of 16S rRNA. The polypeptide is Ribosomal RNA small subunit methyltransferase H (Amoebophilus asiaticus (strain 5a2)).